Consider the following 354-residue polypeptide: Magnesium-protoporphyrin IX monomethyl ester [oxidative] cyclase 2 (354 aa).

The protein belongs to the AcsF family. Requires Fe cation as cofactor.

The catalysed reaction is Mg-protoporphyrin IX 13-monomethyl ester + 3 NADPH + 3 O2 + 2 H(+) = 3,8-divinyl protochlorophyllide a + 3 NADP(+) + 5 H2O. Its pathway is porphyrin-containing compound metabolism; chlorophyll biosynthesis (light-independent). Functionally, catalyzes the formation of the isocyclic ring in chlorophyll biosynthesis. Mediates the cyclase reaction, which results in the formation of divinylprotochlorophyllide (Pchlide) characteristic of all chlorophylls from magnesium-protoporphyrin IX 13-monomethyl ester (MgPMME). In Thermosynechococcus vestitus (strain NIES-2133 / IAM M-273 / BP-1), this protein is Magnesium-protoporphyrin IX monomethyl ester [oxidative] cyclase 2.